We begin with the raw amino-acid sequence, 865 residues long: Bifunctional uridylyltransferase/uridylyl-removing enzyme (865 aa).

The interval 1 to 318 (MPHVDLNPLK…FPRPDSDARL (318 aa)) is uridylyltransferase. The interval 319 to 675 (IDDDFRNLRE…VRPTEHGEGL (357 aa)) is uridylyl-removing. The HD domain occupies 437–559 (VDQHTLAVVR…VGDERRLAAL (123 aa)). 2 ACT domains span residues 676-762 (QVMV…RLPH) and 789-865 (RLSV…QQAA). The disordered stretch occupies residues 747-767 (DPHAARHAHAPRRLPHSHARR). A compositionally biased stretch (basic residues) spans 751–767 (ARHAHAPRRLPHSHARR).

Belongs to the GlnD family. Mg(2+) is required as a cofactor.

The enzyme catalyses [protein-PII]-L-tyrosine + UTP = [protein-PII]-uridylyl-L-tyrosine + diphosphate. It catalyses the reaction [protein-PII]-uridylyl-L-tyrosine + H2O = [protein-PII]-L-tyrosine + UMP + H(+). Uridylyltransferase (UTase) activity is inhibited by glutamine, while glutamine activates uridylyl-removing (UR) activity. Its function is as follows. Modifies, by uridylylation and deuridylylation, the PII regulatory proteins (GlnB and homologs), in response to the nitrogen status of the cell that GlnD senses through the glutamine level. Under low glutamine levels, catalyzes the conversion of the PII proteins and UTP to PII-UMP and PPi, while under higher glutamine levels, GlnD hydrolyzes PII-UMP to PII and UMP (deuridylylation). Thus, controls uridylylation state and activity of the PII proteins, and plays an important role in the regulation of nitrogen assimilation and metabolism. This Bordetella parapertussis (strain 12822 / ATCC BAA-587 / NCTC 13253) protein is Bifunctional uridylyltransferase/uridylyl-removing enzyme.